We begin with the raw amino-acid sequence, 665 residues long: UvrABC system protein B (665 aa).

A Helicase ATP-binding domain is found at 25–412; the sequence is ASIEGGNRYQ…ENRIVEQVIR (388 aa). Residue 38-45 participates in ATP binding; the sequence is GATGTGKT. A Beta-hairpin motif is present at residues 91-114; that stretch reads YYDYYQPEAYIPVTDTYIEKTAAI. Residues 429 to 583 form the Helicase C-terminal domain; the sequence is QIDDLLGEIK…VAYNKLHGIT (155 aa). In terms of domain architecture, UVR spans 626-661; the sequence is PNLIDKLEAQMKEASKKLEFEEAAKLRDRIKQLRDK.

Belongs to the UvrB family. As to quaternary structure, forms a heterotetramer with UvrA during the search for lesions. Interacts with UvrC in an incision complex.

It is found in the cytoplasm. The UvrABC repair system catalyzes the recognition and processing of DNA lesions. A damage recognition complex composed of 2 UvrA and 2 UvrB subunits scans DNA for abnormalities. Upon binding of the UvrA(2)B(2) complex to a putative damaged site, the DNA wraps around one UvrB monomer. DNA wrap is dependent on ATP binding by UvrB and probably causes local melting of the DNA helix, facilitating insertion of UvrB beta-hairpin between the DNA strands. Then UvrB probes one DNA strand for the presence of a lesion. If a lesion is found the UvrA subunits dissociate and the UvrB-DNA preincision complex is formed. This complex is subsequently bound by UvrC and the second UvrB is released. If no lesion is found, the DNA wraps around the other UvrB subunit that will check the other stand for damage. The sequence is that of UvrABC system protein B from Nostoc sp. (strain PCC 7120 / SAG 25.82 / UTEX 2576).